The sequence spans 174 residues: Transcription factor bHLH36 (174 aa).

One can recognise a bHLH domain in the interval 1–53 (MEKMMHRETERQRRQEMASLYASLRSLLPLHFIKGKRSTSDQVNEAVNYIKYL).

In terms of assembly, homodimer. In terms of tissue distribution, expressed constitutively in roots, leaves, stems, and flowers.

It is found in the nucleus. The polypeptide is Transcription factor bHLH36 (BHLH36) (Arabidopsis thaliana (Mouse-ear cress)).